We begin with the raw amino-acid sequence, 269 residues long: Protein BASIC PENTACYSTEINE3 (269 aa).

It belongs to the BBR/BPC family. Expressed in seedlings, leaves and pistils. Detected in the base of flowers and tips of carpels, in petal vasculature, in anthers, in young rosette, in the lateral and primary roots, and in the gynobasal portion of the ovule.

The protein resides in the nucleus. Transcriptional regulator that specifically binds to GA-rich elements (GAGA-repeats) present in regulatory sequences of genes involved in developmental processes. This Arabidopsis thaliana (Mouse-ear cress) protein is Protein BASIC PENTACYSTEINE3 (BPC3).